Here is a 225-residue protein sequence, read N- to C-terminus: Glutathione s-transferase kappa 2 (225 aa).

Residues 15–17 (SPY), Asn52, and 200–201 (SD) contribute to the glutathione site.

The protein belongs to the GST superfamily. Kappa family. As to expression, expressed in the pharynx, body wall muscles and epidermis. Weaker expression is seen in the intestine.

It localises to the mitochondrion. It carries out the reaction RX + glutathione = an S-substituted glutathione + a halide anion + H(+). Has roles in respiratory and lipid metabolism. The sequence is that of Glutathione s-transferase kappa 2 (gstk-2) from Caenorhabditis elegans.